A 1376-amino-acid polypeptide reads, in one-letter code: Zinc finger MYM-type protein 2 (1376 aa).

Over residues 30 to 53 (NVGNSFSGPPNPLVSRSSKFQNSS) the composition is skewed to polar residues. Disordered regions lie at residues 30-56 (NVGN…SVED) and 85-158 (TSSK…FSSS). Glycyl lysine isopeptide (Lys-Gly) (interchain with G-Cter in SUMO2) cross-links involve residues Lys48, Lys88, Lys98, and Lys104. Positions 127–138 (TNQGQEKSSSNF) are enriched in polar residues. Positions 139–152 (IERRPSETKNRTND) are enriched in basic and acidic residues. Glycyl lysine isopeptide (Lys-Gly) (interchain with G-Cter in SUMO2) cross-links involve residues Lys147, Lys253, and Lys297. The segment at 269–304 (DVFQNGESAPHHNPDSWISQSASFPRNQKQQGVDSL) is disordered. Residues 284 to 302 (SWISQSASFPRNQKQQGVD) show a composition bias toward polar residues. At Ser305 the chain carries Phosphoserine. Glycyl lysine isopeptide (Lys-Gly) (interchain with G-Cter in SUMO2) cross-links involve residues Lys312, Lys324, Lys347, and Lys365. The MYM-type 1 zinc finger occupies 326–362 (VKVTCANCKKPLQKGQTAYQRKGSAHLFCSTTCLSSF). Residues 368-408 (PKKLCVMCKKDITTMKGTIVAQVDSSESFQEFCSTSCLSLY) form an MYM-type 2 zinc finger. Glycyl lysine isopeptide (Lys-Gly) (interchain with G-Cter in SUMO2) cross-links involve residues Lys416, Lys440, Lys490, Lys502, Lys512, Lys528, and Lys531. 2 consecutive MYM-type zinc fingers follow at residues 420 to 455 (NKSR…FNRY) and 462 to 501 (IMNC…VTEY). The MYM-type 5 zinc-finger motif lies at 532–569 (LTTCTGCRTQCRFFDMTQCIGPNGYMEPYCSTACMNSH). Glycyl lysine isopeptide (Lys-Gly) (interchain with G-Cter in SUMO2) cross-links involve residues Lys575, Lys602, Lys648, Lys657, Lys687, Lys699, and Lys708. Residues 635 to 670 (QLKCNYCKNSFCSKPEILEWENKVHQFCSKTCSDDY) form an MYM-type 6 zinc finger. 2 MYM-type zinc fingers span residues 722–757 (RCVT…CKKF) and 763–798 (KAAR…LLRF). Residues Lys763, Lys787, Lys811, and Lys828 each participate in a glycyl lysine isopeptide (Lys-Gly) (interchain with G-Cter in SUMO2) cross-link. Ser837 is subject to Phosphoserine. The interval 1027–1063 (VFGEEYEEQPRPRSKKKGTKRKAVSGYQSHDDSSDNS) is disordered. Basic residues predominate over residues 1038 to 1049 (PRSKKKGTKRKA). Ser1063 bears the Phosphoserine mark. A Phosphothreonine modification is found at Thr1375.

As to quaternary structure, can form homodimers. May be a component of a BHC histone deacetylase complex that contains HDAC1, HDAC2, HMG20B/BRAF35, KDM1A, RCOR1/CoREST, PHF21A/BHC80, ZMYM2, ZNF217, ZMYM3, GSE1 and GTF2I. Interacts with FOXP1 and FOXP2. As to expression, low but widespread expression is detected in the developing kidney.

The protein localises to the nucleus. Its function is as follows. Involved in the negative regulation of transcription. This Mus musculus (Mouse) protein is Zinc finger MYM-type protein 2 (Zmym2).